The sequence spans 172 residues: UPF0254 protein Mlab_1743 (172 aa).

It belongs to the UPF0254 family.

The polypeptide is UPF0254 protein Mlab_1743 (Methanocorpusculum labreanum (strain ATCC 43576 / DSM 4855 / Z)).